Here is a 950-residue protein sequence, read N- to C-terminus: Protocadherin alpha-8 (950 aa).

The signal sequence occupies residues 1-29 (MVYHWRGDLGSWRLLLLLLLLAAWKVGSG). 6 consecutive Cadherin domains span residues 30-133 (QLHY…PPVF), 157-242 (ASDA…APNF), 243-350 (EQSE…VPEI), 351-455 (ALTS…APAF), 456-565 (AQPE…APAL), and 581-678 (VPRS…APKA). The Extracellular portion of the chain corresponds to 30–697 (QLHYSVPEEA…GPEAALVDVN (668 aa)). Asn257 and Asn265 each carry an N-linked (GlcNAc...) asparagine glycan. Residue Asn548 is glycosylated (N-linked (GlcNAc...) asparagine). A helical transmembrane segment spans residues 698–718 (VYLIIAICAVSSLLVLTLLLY). Over 719-950 (TALRCSALPT…GNSTTDNSDQ (232 aa)) the chain is Cytoplasmic. PXXP repeat units lie at residues 774–777 (PCLP), 799–802 (PRQP), 832–835 (PGGP), 873–876 (PGNP), and 891–894 (PGSP). The segment at 774–894 (PCLPPDLGSV…PDKFIIPGSP (121 aa)) is 5 X 4 AA repeats of P-X-X-P. Residues 831–950 (GPGGPDQQWP…GNSTTDNSDQ (120 aa)) are disordered. Over residues 909–923 (DKSDFITFGKKEETK) the composition is skewed to basic and acidic residues.

Its subcellular location is the cell membrane. Functionally, potential calcium-dependent cell-adhesion protein. May be involved in the establishment and maintenance of specific neuronal connections in the brain. This Pan troglodytes (Chimpanzee) protein is Protocadherin alpha-8 (PCDHA8).